A 514-amino-acid polypeptide reads, in one-letter code: ATP synthase subunit alpha (514 aa).

170 to 177 (GDRQIGKT) serves as a coordination point for ATP.

It belongs to the ATPase alpha/beta chains family. As to quaternary structure, F-type ATPases have 2 components, CF(1) - the catalytic core - and CF(0) - the membrane proton channel. CF(1) has five subunits: alpha(3), beta(3), gamma(1), delta(1), epsilon(1). CF(0) has three main subunits: a(1), b(2) and c(9-12). The alpha and beta chains form an alternating ring which encloses part of the gamma chain. CF(1) is attached to CF(0) by a central stalk formed by the gamma and epsilon chains, while a peripheral stalk is formed by the delta and b chains.

It is found in the cell inner membrane. It catalyses the reaction ATP + H2O + 4 H(+)(in) = ADP + phosphate + 5 H(+)(out). Produces ATP from ADP in the presence of a proton gradient across the membrane. The alpha chain is a regulatory subunit. The sequence is that of ATP synthase subunit alpha from Pseudomonas fluorescens (strain ATCC BAA-477 / NRRL B-23932 / Pf-5).